A 392-amino-acid polypeptide reads, in one-letter code: Odorant receptor 85f (392 aa).

Residues 1 to 36 (MEPVQYSYEDFARLPTTVFWIMGYDMLGVPKTRSRR) lie on the Cytoplasmic side of the membrane. A helical membrane pass occupies residues 37-57 (ILYWIYRFLCLASHGVCVGVM). Over 58-69 (VFRMVEAKTIDN) the chain is Extracellular. A glycan (N-linked (GlcNAc...) asparagine) is linked at Asn69. Residues 70–90 (VSLIMRYATLVTYIINSDTKF) traverse the membrane as a helical segment. Residues 91-130 (ATVLQRSAIQSLNSKLAELYPKTTLDRIYHRVNDHYWTKS) lie on the Cytoplasmic side of the membrane. The chain crosses the membrane as a helical span at residues 131 to 151 (FVYLVIIYIGSSIMVVIGPII). Residues 152-179 (TSIIAYFTHNVFTYMHCYPYFLYDPEKD) lie on the Extracellular side of the membrane. The chain crosses the membrane as a helical span at residues 180–200 (PVWIYISIYALEWLHSTQMVI). Residues 201–268 (SNIGADIWLL…NDLNGIFGKS (68 aa)) are Cytoplasmic-facing. The helical transmembrane segment at 269–289 (LLLSLLTTAAVICTVAVYTLI) threads the bilayer. At 290 to 295 (QGPTLE) the chain is on the extracellular side. A helical transmembrane segment spans residues 296–316 (GFTYVIFIGTSVMQVYLVCYY). Residues 317-363 (GQQVLDLSGEVAHAVYNHDFHDASIAYKRYLLIIIIRAQQPVELNAM) are Cytoplasmic-facing. The chain crosses the membrane as a helical span at residues 364–384 (GYLSISLDTFKQLMSVSYRVI). Over 385 to 392 (TMLMQMIQ) the chain is Extracellular.

Belongs to the insect chemoreceptor superfamily. Heteromeric odorant receptor channel (TC 1.A.69) family. Or49a subfamily. In terms of assembly, interacts with Orco. Complexes exist early in the endomembrane system in olfactory sensory neurons (OSNs), coupling these complexes to the conserved ciliary trafficking pathway. Expressed in olfactory sensory neurons in the antenna.

It is found in the cell membrane. Functionally, odorant receptor which mediates acceptance or avoidance behavior, depending on its substrates. The odorant receptor repertoire encodes a large collection of odor stimuli that vary widely in identity, intensity, and duration. May form a complex with Orco to form odorant-sensing units, providing sensitive and prolonged odorant signaling and calcium permeability. The polypeptide is Odorant receptor 85f (Or85f) (Drosophila melanogaster (Fruit fly)).